A 594-amino-acid polypeptide reads, in one-letter code: UV-stimulated scaffold protein A homolog (594 aa).

A VHS-like region spans residues 24–170; the sequence is RKNLNRFIRE…VTLKKTKFVD (147 aa). Residues 170 to 198 are a coiled coil; that stretch reads DYENGAKKIEAERKRKKILEERKMKMIEN. Residues 466–493 form a UVSSA-type zinc finger; sequence RKVCLAKMKSGKLCPRKDYYTCPLHGKI. Zn(2+) is bound by residues Cys469, Cys479, Cys487, and His490. Residues 503 to 540 adopt a coiled-coil conformation; sequence INEEDRLEENYRKEQNHLKEADKIRQMIEKEYESKTKR. The segment at 533–558 is disordered; that stretch reads EYESKTKRRKKHDVDTTASEDVRNRL. Residues 544–558 show a composition bias toward basic and acidic residues; sequence HDVDTTASEDVRNRL.

The protein belongs to the UVSSA family.

The protein localises to the chromosome. Factor involved in transcription-coupled nucleotide excision repair (TC-NER) in response to UV damage. TC-NER allows RNA polymerase II-blocking lesions to be rapidly removed from the transcribed strand of active genes. The sequence is that of UV-stimulated scaffold protein A homolog from Caenorhabditis elegans.